The following is a 364-amino-acid chain: MPHSHPALTPEQKKELSDIAHRIVAPGKGILAADESTGSIAKRLQSIGTENTEENRRFYRQLLLTADDRVNPCIGGVILFHETLYQKADDGRPFPQVIKSKGGVVGIKVDKGVVPLAGTNGETTTQGLDGLSERCAQYKKDGADFAKWRCVLKIGEHTPSALAIMENANVLARYASICQQNGIVPIVEPEILPDGDHDLKRCQYVTEKVLAAVYKALSDHHIYLEGTLLKPNMVTPGHACTQKYSHEEIAMATVTALRRTVPPAVTGVTFLSGGQSEEEASINLNAINKCPLLKPWALTFSYGRALQASALKAWGGKKENLKAAQEEYVKRALANSLACQGKYTPSGQAGAAASESLFISNHAY.

At Thr9 the chain carries Phosphothreonine. Ser36 and Ser39 each carry phosphoserine. Lys42 carries the post-translational modification N6-acetyllysine; alternate. Lys42 participates in a covalent cross-link: Glycyl lysine isopeptide (Lys-Gly) (interchain with G-Cter in SUMO1); alternate. Residue Lys42 forms a Glycyl lysine isopeptide (Lys-Gly) (interchain with G-Cter in SUMO2); alternate linkage. Arg43 contacts beta-D-fructose 1,6-bisphosphate. Ser46 is subject to Phosphoserine. Lys99 is modified (N6-(2-hydroxyisobutyryl)lysine). Lys108 is modified (N6-acetyllysine). Lys111 bears the N6-acetyllysine; alternate mark. At Lys111 the chain carries N6-malonyllysine; alternate. Residue Ser132 is modified to Phosphoserine. Lys147 is subject to N6-(2-hydroxyisobutyryl)lysine. The Proton acceptor role is filled by Glu188. Lys230 functions as the Schiff-base intermediate with dihydroxyacetone-P in the catalytic mechanism. Ser272 is subject to Phosphoserine. Beta-D-fructose 1,6-bisphosphate-binding positions include 272 to 274, Ser301, and Arg304; that span reads SGG. The residue at position 312 (Lys312) is an N6-malonyllysine. Lys330 is modified (N6-acetyllysine). Residue Asn361 is modified to Deamidated asparagine; in form beta.

The protein belongs to the class I fructose-bisphosphate aldolase family. As to quaternary structure, homotetramer. Interacts with SNX9 and WAS. Interacts with FBP2; the interaction blocks FBP2 inhibition by physiological concentrations of AMP and reduces inhibition by Ca(2+). Post-translationally, asn-361 in form alpha is deaminated to Asp in form beta.

The protein localises to the cytoplasm. It localises to the myofibril. Its subcellular location is the sarcomere. It is found in the i band. The protein resides in the m line. The enzyme catalyses beta-D-fructose 1,6-bisphosphate = D-glyceraldehyde 3-phosphate + dihydroxyacetone phosphate. Its pathway is carbohydrate degradation; glycolysis; D-glyceraldehyde 3-phosphate and glycerone phosphate from D-glucose: step 4/4. Functionally, plays a key role in glycolysis and gluconeogenesis. In addition, may also function as scaffolding protein. This is Fructose-bisphosphate aldolase A (ALDOA) from Oryctolagus cuniculus (Rabbit).